Here is a 205-residue protein sequence, read N- to C-terminus: Guanylate kinase (205 aa).

Residues 3–181 (GSLYIISAPS…ALSELHSIFL (179 aa)) enclose the Guanylate kinase-like domain. 10-17 (APSGAGKT) is a binding site for ATP.

The protein belongs to the guanylate kinase family.

The protein resides in the cytoplasm. It carries out the reaction GMP + ATP = GDP + ADP. Its function is as follows. Essential for recycling GMP and indirectly, cGMP. The protein is Guanylate kinase of Hydrogenovibrio crunogenus (strain DSM 25203 / XCL-2) (Thiomicrospira crunogena).